Consider the following 115-residue polypeptide: uncharacterized protein (115 aa).

This is an uncharacterized protein from Caenorhabditis elegans.